The sequence spans 253 residues: Ribulose bisphosphate carboxylase large chain (253 aa).

The substrate site is built by N35 and T85. K87 (proton acceptor) is an active-site residue. A substrate-binding site is contributed by K89. Mg(2+)-binding residues include K113, D115, and E116. The residue at position 113 (K113) is an N6-carboxylysine. Catalysis depends on H206, which acts as the Proton acceptor. The substrate site is built by R207 and H239.

It belongs to the RuBisCO large chain family. Type I subfamily. In terms of assembly, heterohexadecamer of 8 large chains and 8 small chains; disulfide-linked. The disulfide link is formed within the large subunit homodimers. Requires Mg(2+) as cofactor. The disulfide bond which can form in the large chain dimeric partners within the hexadecamer appears to be associated with oxidative stress and protein turnover.

Its subcellular location is the plastid. It is found in the chloroplast. It carries out the reaction 2 (2R)-3-phosphoglycerate + 2 H(+) = D-ribulose 1,5-bisphosphate + CO2 + H2O. The enzyme catalyses D-ribulose 1,5-bisphosphate + O2 = 2-phosphoglycolate + (2R)-3-phosphoglycerate + 2 H(+). In terms of biological role, ruBisCO catalyzes two reactions: the carboxylation of D-ribulose 1,5-bisphosphate, the primary event in carbon dioxide fixation, as well as the oxidative fragmentation of the pentose substrate in the photorespiration process. Both reactions occur simultaneously and in competition at the same active site. This Magnolia latahensis (Apocynophyllum latahense) protein is Ribulose bisphosphate carboxylase large chain (rbcL).